The following is a 171-amino-acid chain: MNHEQPDIESQQSAADAAATAGVNDEVERLRAEIEQVKADALRERADLENQRKRVARDIEQARKFANEKLLGDLLPVFDSLDAGLKAAGDDPHPLREGLELTYKQLLKVAADNGLVLLDPIGQPFNPEHHQAISQVPTPGAAPGSVVTVFQKGYLLNERLLRPALVVVAAD.

The tract at residues 1-22 (MNHEQPDIESQQSAADAAATAG) is disordered.

Belongs to the GrpE family. As to quaternary structure, homodimer.

Its subcellular location is the cytoplasm. Participates actively in the response to hyperosmotic and heat shock by preventing the aggregation of stress-denatured proteins, in association with DnaK and GrpE. It is the nucleotide exchange factor for DnaK and may function as a thermosensor. Unfolded proteins bind initially to DnaJ; upon interaction with the DnaJ-bound protein, DnaK hydrolyzes its bound ATP, resulting in the formation of a stable complex. GrpE releases ADP from DnaK; ATP binding to DnaK triggers the release of the substrate protein, thus completing the reaction cycle. Several rounds of ATP-dependent interactions between DnaJ, DnaK and GrpE are required for fully efficient folding. This Stenotrophomonas maltophilia (strain K279a) protein is Protein GrpE.